Consider the following 1077-residue polypeptide: Eukaryotic translation initiation factor 2-alpha kinase pek-1 (1077 aa).

The N-terminal stretch at 1–23 (MSVYYIVLAGFLLFMALVPFNAG) is a signal peptide. Residues 24–453 (QQYIDDDIEV…ITLMQTIFSY (430 aa)) lie on the Lumenal side of the membrane. A glycan (N-linked (GlcNAc...) asparagine) is linked at Asn-206. The helical transmembrane segment at 454-474 (IFNPTAVVSFLAGLIGVTVAV) threads the bilayer. Residues 475–1077 (VYNKIAKSSP…HEVATHKFLQ (603 aa)) lie on the Cytoplasmic side of the membrane. The Protein kinase domain maps to 604–1076 (FEVKKVIGHG…AHEVATHKFL (473 aa)). ATP-binding positions include 610-618 (IGHGGFGVV) and Lys-633. The tract at residues 727-834 (MPPVVGNTTD…FVDGSDDVDN (108 aa)) is disordered. A compositionally biased stretch (polar residues) spans 732 to 746 (GNTTDAENSWSTSAK). Residues 766 to 778 (GSDRTTAELKEES) are compositionally biased toward basic and acidic residues. Residues 783 to 796 (ESDEESDTTEDSSS) are compositionally biased toward acidic residues. Residues 797–808 (SDESPSSSSGSS) are compositionally biased toward low complexity. The active-site Proton acceptor is Asp-933.

Belongs to the protein kinase superfamily. Ser/Thr protein kinase family. GCN2 subfamily. In terms of assembly, forms dimers with HSPA5/BIP in resting cells. Oligomerizes in ER-stressed cells. Autophosphorylated. In terms of processing, N-glycosylated. Expressed in intestinal cells.

It localises to the endoplasmic reticulum membrane. The enzyme catalyses L-seryl-[protein] + ATP = O-phospho-L-seryl-[protein] + ADP + H(+). The catalysed reaction is L-threonyl-[protein] + ATP = O-phospho-L-threonyl-[protein] + ADP + H(+). With respect to regulation, perturbation in protein folding in the endoplasmic reticulum (ER) promotes reversible dissociation from HSPA5/BIP and oligomerization, resulting in transautophosphorylation and kinase activity induction. Its function is as follows. Phosphorylates the alpha subunit of eukaryotic translation-initiation factor 2 (eIF2alpha), leading to its inactivation and thus to a rapid reduction of translational initiation and repression of global protein synthesis. May phosphorylate eIF2alpha during hypoxia. Proposed to have a role in alleviating endoplasmic reticulum stress. The polypeptide is Eukaryotic translation initiation factor 2-alpha kinase pek-1 (pek-1) (Caenorhabditis elegans).